Here is a 579-residue protein sequence, read N- to C-terminus: uncharacterized protein (579 aa).

In terms of domain architecture, GGDEF spans 449 to 577; sequence QKGVFILVDI…GKNRLMIHDS (129 aa).

This is an uncharacterized protein from Bacillus subtilis (strain 168).